The following is a 493-amino-acid chain: Transcript termination protein A18 (493 aa).

Residues 100–256 form the Helicase ATP-binding domain; that stretch reads MIESKRPLYI…NSIINIAKLS (157 aa). Position 113–120 (113–120) interacts with ATP; the sequence is LACGFGKT. Positions 206–209 match the DESH box motif; it reads DESH.

This sequence belongs to the helicase family. Poxviruses subfamily. In terms of assembly, interacts with G2. Might be part of a transcription complex composed at least of G2, A18, and H5.

It is found in the virion. Functionally, DNA helicase which seems to act as a postreplicative transcription termination factor. Involved in ATP-dependent release of nascent RNA. Forms a stable complex with single-stranded DNA, and to a lesser extent RNA. This Homo sapiens (Human) protein is Transcript termination protein A18.